The sequence spans 185 residues: Signal peptidase complex subunit 3 (185 aa).

Over 1-16 (MHTSIQRIQQTFSQAS) the chain is Cytoplasmic. A helical; Signal-anchor for type II membrane protein transmembrane segment spans residues 17–37 (TVLSIIAAIVFVVSYIQLVVA). Topologically, residues 38–185 (NVWSLPEANF…KGSIKFPQLV (148 aa)) are lumenal. N-linked (GlcNAc...) asparagine glycosylation occurs at N151.

Belongs to the SPCS3 family. In terms of assembly, component of the signal peptidase complex (SPC) composed of a catalytic subunit SEC11 and three accessory subunits SPC1, SPC2 and SPC3. The complex induces a local thinning of the ER membrane which is used to measure the length of the signal peptide (SP) h-region of protein substrates. This ensures the selectivity of the complex towards h-regions shorter than 18-20 amino acids. SPC associates with the translocon complex.

It localises to the endoplasmic reticulum membrane. Functionally, essential component of the signal peptidase complex (SPC) which catalyzes the cleavage of N-terminal signal sequences from nascent proteins as they are translocated into the lumen of the endoplasmic reticulum. Essential for the SPC catalytic activity, possibly by stabilizing and positioning the active center of the complex close to the lumenal surface. Essential for viability. The sequence is that of Signal peptidase complex subunit 3 (SPC3) from Yarrowia lipolytica (strain CLIB 122 / E 150) (Yeast).